The chain runs to 642 residues: Stress-activated map kinase-interacting protein 1 homolog (642 aa).

In terms of domain architecture, CRIM spans 189 to 314 (ARIREVIGYC…EREPLFQGLL (126 aa)). Positions 603–642 (IVSPSSDAPSRSSNGKNGGKFRKMSSLMASVMGRRKSDSK) are disordered. A compositionally biased stretch (low complexity) spans 605-615 (SPSSDAPSRSS).

Belongs to the SIN1 family. As to quaternary structure, component of the target of rapamycin complex 2 (TORC2).

Component of the target of rapamycin complex 2 (TORC2), which transduces signals from growth factors to pathways involved in proliferation, cytoskeletal organization and anabolic output. In response to growth factors, TORC2 phosphorylates and activates AGC protein kinase family members, such as Akt1. Within the TORC2 complex, sinh-1 acts as a substrate adapter which recognizes and binds AGC protein kinase family members for phosphorylation by mTor. The sequence is that of Stress-activated map kinase-interacting protein 1 homolog (sinh-1) from Caenorhabditis elegans.